Consider the following 323-residue polypeptide: DNA primase small subunit PriS (323 aa).

Residues D97, D99, and D274 contribute to the active site.

The protein belongs to the eukaryotic-type primase small subunit family. In terms of assembly, heterodimer of a small subunit (PriS) and a large subunit (PriL). Mg(2+) serves as cofactor. It depends on Mn(2+) as a cofactor.

In terms of biological role, catalytic subunit of DNA primase, an RNA polymerase that catalyzes the synthesis of short RNA molecules used as primers for DNA polymerase during DNA replication. The small subunit contains the primase catalytic core and has DNA synthesis activity on its own. Binding to the large subunit stabilizes and modulates the activity, increasing the rate of DNA synthesis while decreasing the length of the DNA fragments, and conferring RNA synthesis capability. The DNA polymerase activity may enable DNA primase to also catalyze primer extension after primer synthesis. May also play a role in DNA repair. This Methanothermobacter thermautotrophicus (strain ATCC 29096 / DSM 1053 / JCM 10044 / NBRC 100330 / Delta H) (Methanobacterium thermoautotrophicum) protein is DNA primase small subunit PriS.